A 182-amino-acid polypeptide reads, in one-letter code: uncharacterized protein (182 aa).

Disordered stretches follow at residues 1-49 (MAAP…DGGS) and 126-171 (QGGH…VHAQ). A compositionally biased stretch (basic and acidic residues) spans 17 to 39 (ELLEKAARLERGPPPRGDPEAVG).

This is an uncharacterized protein from Homo sapiens (Human).